The sequence spans 354 residues: tRNA N6-adenosine threonylcarbamoyltransferase (354 aa).

Positions 121, 125, and 142 each coordinate a divalent metal cation. Residues 142–146, aspartate 174, glycine 189, glutamate 193, and asparagine 285 each bind substrate; that span reads YVSGG. Position 313 (aspartate 313) interacts with a divalent metal cation.

This sequence belongs to the KAE1 / TsaD family. As to quaternary structure, component of the EKC/KEOPS complex composed of at least bud32, cgi121, gon7, kae1 and pcc1; the whole complex dimerizes. A divalent metal cation is required as a cofactor.

It is found in the cytoplasm. It localises to the nucleus. It catalyses the reaction L-threonylcarbamoyladenylate + adenosine(37) in tRNA = N(6)-L-threonylcarbamoyladenosine(37) in tRNA + AMP + H(+). Component of the EKC/KEOPS complex that is required for the formation of a threonylcarbamoyl group on adenosine at position 37 (t(6)A37) in tRNAs that read codons beginning with adenine. The complex is probably involved in the transfer of the threonylcarbamoyl moiety of threonylcarbamoyl-AMP (TC-AMP) to the N6 group of A37. Kae1 likely plays a direct catalytic role in this reaction, but requires other protein(s) of the complex to fulfill this activity. The EKC/KEOPS complex also promotes both telomere uncapping and telomere elongation. The complex is required for efficient recruitment of transcriptional coactivators. In Neurospora crassa (strain ATCC 24698 / 74-OR23-1A / CBS 708.71 / DSM 1257 / FGSC 987), this protein is tRNA N6-adenosine threonylcarbamoyltransferase (gpe-1).